The primary structure comprises 484 residues: Pre-glycoprotein polyprotein GP complex (484 aa).

A lipid anchor (N-myristoyl glycine; by host) is attached at Gly-2. Residues 2–17 (GQLVSFFQEIPNIIQE) lie on the Extracellular side of the membrane. Residues 18-33 (AINIALIAVSLIAILK) traverse the membrane as a helical segment. At 34–58 (GLVNLWKSGLFQLLVFLILAGRSCS) the chain is on the cytoplasmic side. Cys-57 lines the Zn(2+) pocket. Topologically, residues 59–423 (FKIGRSTELQ…QGKTPITLVD (365 aa)) are extracellular. 4 disulfide bridges follow: Cys-85–Cys-225, Cys-270–Cys-283, Cys-292–Cys-301, and Cys-355–Cys-376. 4 N-linked (GlcNAc...) asparagine; by host glycosylation sites follow: Asn-88, Asn-125, Asn-178, and Asn-218. N-linked (GlcNAc...) asparagine; by host glycans are attached at residues Asn-356, Asn-364, Asn-381, and Asn-386. A helical transmembrane segment spans residues 424–444 (ICFWSTLFFTTTLFLHLVGFP). Residues 445 to 484 (THRHIQGEPCPLPHKLNSNGGCRCGRYPELKKPTTWHRKH) are Cytoplasmic-facing. Positions 446, 448, 454, 458, 466, 468, and 484 each coordinate Zn(2+).

This sequence belongs to the arenaviridae GPC protein family. Interacts with glycoprotein G2. Part of the GP complex (GP-C) together with glycoprotein G1 and glycoprotein G2. The GP-complex interacts with protein Z, which interacts with ribonucleocapsid; these interactions may induce virion budding. As to quaternary structure, homotrimer; disulfide-linked. In pre-fusion state, G1 homotrimers bind G2 homotrimers via ionic interactions. Part of the GP complex (GP-C) together with glycoprotein G2 and the stable signal peptide. The GP-complex interacts with protein Z, which interacts with ribonucleocapsid; these interactions may induce virion budding. In terms of assembly, homotrimer. Interacts with the stable signal peptide. In pre-fusion state, G2 homotrimers bind G1 homotrimers via ionic interactions. Part of the GP complex (GP-C) together with glycoprotein G1 and the stable signal peptide. Acidification in the endosome triggers rearrangements, which ultimately leads to a 6 helix bundle formed by the two heptad repeat domains (HR1 and HR2) in post-fusion state. The GP-complex interacts with protein Z, which interacts with ribonucleocapsid; these interactions may induce virion budding. In terms of processing, specific enzymatic cleavages in vivo yield mature proteins. GP-C polyprotein is cleaved in the endoplasmic reticulum by the host protease MBTPS1. Only cleaved glycoprotein is incorporated into virions. Post-translationally, the SSP remains stably associated with the GP complex following cleavage by signal peptidase and plays crucial roles in the trafficking of GP through the secretory pathway. Myristoylation is necessary for GP2-mediated fusion activity.

It localises to the virion membrane. Its subcellular location is the host endoplasmic reticulum membrane. The protein localises to the host Golgi apparatus membrane. The protein resides in the host cell membrane. Functions as a cleaved signal peptide that is retained as the third component of the GP complex (GP-C). Helps to stabilize the spike complex in its native conformation. The SSP is required for efficient glycoprotein expression, post-translational maturation cleavage of G1 and G2, glycoprotein transport to the cell surface plasma membrane, formation of infectious virus particles, and acid pH-dependent glycoprotein-mediated cell fusion. Functionally, glycoprotein G1: Forms the virion spikes together with glycoprotein G2. The glycoprotein spike trimers are connected to the underlying matrix. Interacts with the host receptor leading to virus endocytosis. In terms of biological role, forms the virion spikes together with glycoprotein G1. The glycoprotein spike trimers are connected to the underlying matrix. Class I viral fusion protein that directs fusion of viral and host endosomal membranes, leading to delivery of the nucleocapsid into the cytoplasm. Membrane fusion is mediated by irreversible conformational changes induced by acidification. This is Pre-glycoprotein polyprotein GP complex from Chapare mammarenavirus (isolate Human/Bolivia/810419/2003).